The following is a 359-amino-acid chain: MDCGSVGGQRTQRLPGRQRLLFLPVGLSGRPGGSETSARRCLSALSDGLGALRPRAPAARGGVSRASPLLLLLLVPSPRLAAAAPRRQLGDWERSRLGYAAPPAGRSSAWRCSPGVAAAAGALPQYHGPAPALVSCRRELSLSAGSLQLERKRRDFTSSGSRKLYFDTHALVCLLEDNGFATQQAEIIVSALVKILEANMDIVYKDMVTKMQQEITFQQVMSQIANVKKDMIILEKSEFSALRAENEKIKLELHQLKQQVMDEVIKVRTDTKLDFNLEKSRVKELYSLNEKKLLELRTEIVALHAQQDRALTQTDRKIETEVAGLKTMLESHKLDNIKYLAGSIFTCLTVALGFYRLWI.

At 1–68 (MDCGSVGGQR…ARGGVSRASP (68 aa)) the chain is on the mitochondrial intermembrane side. Residues 69 to 85 (LLLLLLVPSPRLAAAAP) traverse the membrane as a helical segment. Over 86–338 (RRQLGDWERS…LESHKLDNIK (253 aa)) the chain is Mitochondrial matrix. Residues 235–310 (EKSEFSALRA…VALHAQQDRA (76 aa)) are a coiled coil. The helical transmembrane segment at 339–358 (YLAGSIFTCLTVALGFYRLW) threads the bilayer. Residue I359 is a topological domain, mitochondrial intermembrane.

Belongs to the CCDC90 family. As to quaternary structure, interacts (via coiled coil regions) with MCU; the interaction is direct. Interacts with SMDT1/EMRE; the interaction is direct. Interacts with PPIF. In terms of tissue distribution, ubiquitously expressed.

The protein resides in the mitochondrion inner membrane. In terms of biological role, key regulator of mitochondrial calcium uniporter (MCU) required for calcium entry into mitochondrion. Plays a direct role in uniporter-mediated calcium uptake via a direct interaction with MCU. Probably involved in the assembly of the membrane components of the uniporter complex (uniplex). In Homo sapiens (Human), this protein is Mitochondrial calcium uniporter regulator 1.